The sequence spans 154 residues: SsrA-binding protein (154 aa).

Residues 134-154 are disordered; sequence KRQAIKERQTQREIQRELKER.

This sequence belongs to the SmpB family.

It is found in the cytoplasm. Its function is as follows. Required for rescue of stalled ribosomes mediated by trans-translation. Binds to transfer-messenger RNA (tmRNA), required for stable association of tmRNA with ribosomes. tmRNA and SmpB together mimic tRNA shape, replacing the anticodon stem-loop with SmpB. tmRNA is encoded by the ssrA gene; the 2 termini fold to resemble tRNA(Ala) and it encodes a 'tag peptide', a short internal open reading frame. During trans-translation Ala-aminoacylated tmRNA acts like a tRNA, entering the A-site of stalled ribosomes, displacing the stalled mRNA. The ribosome then switches to translate the ORF on the tmRNA; the nascent peptide is terminated with the 'tag peptide' encoded by the tmRNA and targeted for degradation. The ribosome is freed to recommence translation, which seems to be the essential function of trans-translation. This Synechococcus sp. (strain JA-2-3B'a(2-13)) (Cyanobacteria bacterium Yellowstone B-Prime) protein is SsrA-binding protein.